The primary structure comprises 261 residues: Hemin import ATP-binding protein HmuV (261 aa).

The ABC transporter domain occupies 7–243 (LRGQNLSLQF…EIIDAVYGYK (237 aa)). 39–46 (GPNGAGKS) is an ATP binding site.

The protein belongs to the ABC transporter superfamily. Heme (hemin) importer (TC 3.A.1.14.5) family. In terms of assembly, the complex is composed of two ATP-binding proteins (HmuV), two transmembrane proteins (HmuU) and a solute-binding protein (HmuT).

Its subcellular location is the cell inner membrane. Functionally, part of the ABC transporter complex HmuTUV involved in hemin import. Responsible for energy coupling to the transport system. In Vibrio vulnificus (strain CMCP6), this protein is Hemin import ATP-binding protein HmuV.